The primary structure comprises 106 residues: Probable insulin-like peptide beta-type 1 (106 aa).

The N-terminal stretch at 1–19 (MFSFFTYFLLSALLLSASC) is a signal peptide. Residues 20–51 (RQPSMDTSKADRILREIEMETELENQLSRARR) constitute a propeptide, removed; by convertase egl-3. 4 cysteine pairs are disulfide-bonded: cysteine 60–cysteine 89, cysteine 72–cysteine 102, cysteine 76–cysteine 103, and cysteine 88–cysteine 93.

Belongs to the insulin family. Expressed by ASI and ASJ sensory neurons and weakly by ventral cord motor neurons.

Its subcellular location is the secreted. Its function is as follows. Probable insulin-like peptide which negatively regulates synapse development at the neuromuscular junctions. Probably acts as a daf-2/InsR agonist ligand to prevent dauer formation under optimal environmental conditions. The chain is Probable insulin-like peptide beta-type 1 (ins-4) from Caenorhabditis elegans.